We begin with the raw amino-acid sequence, 350 residues long: Holliday junction branch migration complex subunit RuvB (350 aa).

Residues 1-183 are large ATPase domain (RuvB-L); that stretch reads MSAERLVNPH…FVAVHRLVFY (183 aa). Residues Leu22, Arg23, Gly64, Lys67, Thr68, Ser69, 130–132, Arg173, Tyr183, and Arg220 each bind ATP; that span reads EDF. Position 68 (Thr68) interacts with Mg(2+). Residues 184–254 are small ATPAse domain (RuvB-S); it reads SDAAMTEIVS…VAREALAQLE (71 aa). A head domain (RuvB-H) region spans residues 257–350; the sequence is ELGLDENDRR…ESGPQQGTLF (94 aa). DNA contacts are provided by Arg312 and Arg317.

The protein belongs to the RuvB family. In terms of assembly, homohexamer. Forms an RuvA(8)-RuvB(12)-Holliday junction (HJ) complex. HJ DNA is sandwiched between 2 RuvA tetramers; dsDNA enters through RuvA and exits via RuvB. An RuvB hexamer assembles on each DNA strand where it exits the tetramer. Each RuvB hexamer is contacted by two RuvA subunits (via domain III) on 2 adjacent RuvB subunits; this complex drives branch migration. In the full resolvosome a probable DNA-RuvA(4)-RuvB(12)-RuvC(2) complex forms which resolves the HJ.

The protein localises to the cytoplasm. It catalyses the reaction ATP + H2O = ADP + phosphate + H(+). Functionally, the RuvA-RuvB-RuvC complex processes Holliday junction (HJ) DNA during genetic recombination and DNA repair, while the RuvA-RuvB complex plays an important role in the rescue of blocked DNA replication forks via replication fork reversal (RFR). RuvA specifically binds to HJ cruciform DNA, conferring on it an open structure. The RuvB hexamer acts as an ATP-dependent pump, pulling dsDNA into and through the RuvAB complex. RuvB forms 2 homohexamers on either side of HJ DNA bound by 1 or 2 RuvA tetramers; 4 subunits per hexamer contact DNA at a time. Coordinated motions by a converter formed by DNA-disengaged RuvB subunits stimulates ATP hydrolysis and nucleotide exchange. Immobilization of the converter enables RuvB to convert the ATP-contained energy into a lever motion, pulling 2 nucleotides of DNA out of the RuvA tetramer per ATP hydrolyzed, thus driving DNA branch migration. The RuvB motors rotate together with the DNA substrate, which together with the progressing nucleotide cycle form the mechanistic basis for DNA recombination by continuous HJ branch migration. Branch migration allows RuvC to scan DNA until it finds its consensus sequence, where it cleaves and resolves cruciform DNA. The polypeptide is Holliday junction branch migration complex subunit RuvB (Chloroflexus aggregans (strain MD-66 / DSM 9485)).